Reading from the N-terminus, the 137-residue chain is MQLVEQSKRATYIGTGRRKSSVARVRLVPGTGQLTINGKSGELYLQFNPTYLAIAKAPLESLGLENDYDILVNTSGGGLTGQADSIRLGVARALCQLDPENRKPLKVEGYLTRDPRAKERKKYGLRKARKAPQYSKR.

Residues 105–117 are compositionally biased toward basic and acidic residues; it reads LKVEGYLTRDPRA. The disordered stretch occupies residues 105–137; the sequence is LKVEGYLTRDPRAKERKKYGLRKARKAPQYSKR. The span at 118–137 shows a compositional bias: basic residues; that stretch reads KERKKYGLRKARKAPQYSKR.

Belongs to the universal ribosomal protein uS9 family.

The polypeptide is Small ribosomal subunit protein uS9 (Cyanothece sp. (strain PCC 7425 / ATCC 29141)).